A 340-amino-acid polypeptide reads, in one-letter code: Adenine deaminase (340 aa).

Residues His17, His19, and His197 each contribute to the Zn(2+) site. The active-site Proton donor is the Glu200. Asp278 provides a ligand contact to Zn(2+). Substrate is bound at residue Asp279.

This sequence belongs to the metallo-dependent hydrolases superfamily. Adenosine and AMP deaminases family. Adenine deaminase type 2 subfamily. Zn(2+) serves as cofactor.

It carries out the reaction adenine + H2O + H(+) = hypoxanthine + NH4(+). Its function is as follows. Catalyzes the hydrolytic deamination of adenine to hypoxanthine. Plays an important role in the purine salvage pathway and in nitrogen catabolism. The polypeptide is Adenine deaminase (Streptomyces coelicolor (strain ATCC BAA-471 / A3(2) / M145)).